The sequence spans 434 residues: Enolase (434 aa).

Ala41 contributes to the phosphoenolpyruvate binding site. Gln165 provides a ligand contact to (2R)-2-phosphoglycerate. The Proton donor role is filled by Glu207. Mg(2+)-binding residues include Asp244, Glu291, and Asp318. The phosphoenolpyruvate site is built by Lys343, Arg372, Ser373, and Lys394. (2R)-2-phosphoglycerate contacts are provided by Lys343, Arg372, Ser373, and Lys394. The active-site Proton acceptor is Lys343.

Belongs to the enolase family. As to quaternary structure, homodimer and homooctamer; the homodimer is inactive. Requires Mg(2+) as cofactor.

The protein localises to the cytoplasm. The protein resides in the secreted. It localises to the cell surface. It catalyses the reaction (2R)-2-phosphoglycerate = phosphoenolpyruvate + H2O. It functions in the pathway carbohydrate degradation; glycolysis; pyruvate from D-glyceraldehyde 3-phosphate: step 4/5. In terms of biological role, catalyzes the reversible conversion of 2-phosphoglycerate (2-PG) into phosphoenolpyruvate (PEP). It is essential for the degradation of carbohydrates via glycolysis. 'Moonlights' as a laminin receptor. Binds laminin when expressed on the bacterial cell surface; this probably induces destruction of the extracellular matrix, favoring invasion and dissemination. In Staphylococcus aureus, this protein is Enolase.